A 1030-amino-acid chain; its full sequence is ATPase MORC2A (1030 aa).

At A2 the chain carries N-acetylalanine. ATP contacts are provided by residues N39, 87–89, and 99–105; these read SAK and QYGNGLK. N39 provides a ligand contact to Mg(2+). Residues 285–362 are a coiled coil; that stretch reads KTRAEQEVKK…KDAKQRALKE (78 aa). K427 contributes to the ATP binding site. The CW-type zinc finger occupies 490 to 544; that stretch reads AMEIPTTIQCDLCLKWRTLPFQLSSVETDYPDTWVCSMNPDPEQDRCEASEQKQK. C499, C502, C525, and C536 together coordinate Zn(2+). The tract at residues 530-791 is disordered; sequence DPEQDRCEAS…HPAELRKAQK (262 aa). 2 stretches are compositionally biased toward basic and acidic residues: residues 532–543 and 550–577; these read EQDRCEASEQKQ and LKKD…KLEA. Residues 555–583 adopt a coiled-coil conformation; the sequence is KTQEEKQKQLTEKIRQQQEKLEALQKTTP. T582 bears the Phosphothreonine mark. S614 bears the Phosphoserine mark. Over residues 629 to 646 the composition is skewed to polar residues; sequence PSIQTPRPSTQLRKTSVI. Residues K650 and K702 each participate in a glycyl lysine isopeptide (Lys-Gly) (interchain with G-Cter in SUMO2) cross-link. The segment covering 693–702 has biased composition (low complexity); the sequence is PPLSLIPSSK. S703 is subject to Phosphoserine. K714 participates in a covalent cross-link: Glycyl lysine isopeptide (Lys-Gly) (interchain with G-Cter in SUMO2). S728 carries the post-translational modification Phosphoserine. T731 carries the post-translational modification Phosphothreonine. Phosphoserine occurs at positions 737 and 741. Positions 738-775 form a coiled coil; sequence LAVSDEEEAEEEAEKRRERCKRGKLAVKEEKKEANELS. Basic and acidic residues predominate over residues 763–772; that stretch reads AVKEEKKEAN. K765 is covalently cross-linked (Glycyl lysine isopeptide (Lys-Gly) (interchain with G-Cter in SUMO2)). Phosphoserine occurs at positions 775 and 777. Positions 779–791 are enriched in basic and acidic residues; sequence GEDHPAELRKAQK. A Glycyl lysine isopeptide (Lys-Gly) (interchain with G-Cter in SUMO2) cross-link involves residue K817. T834 is modified (phosphothreonine). Basic and acidic residues predominate over residues 837 to 849; it reads DRWVEKGSEDVRL. Disordered stretches follow at residues 837-874 and 882-901; these read DRWV…EAMV and PEPS…ATSP. A phosphoserine mark is found at S854 and S859. The segment covering 856-865 has biased composition (polar residues); the sequence is EHQSPDTQQE. K930 is covalently cross-linked (Glycyl lysine isopeptide (Lys-Gly) (interchain with G-Cter in SUMO2)). Residues 966-1011 adopt a coiled-coil conformation; sequence RADSRAKASEESLRTSEKKLRETEEKLQKLRTNIVALLQKVQEDID.

Homodimerizes upon ATP-binding and dissociate upon ATP hydrolysis; homodimerization is required for gene silencing. Binds histone H3 independently of the methylation status at 'Lys-9'. Interacts with HDAC4. Interacts with FAM208A/TASOR and MPHOSPH8; the interactions associate MORC2 with the HUSH complex which recruits MORC2 to heterochromatic loci. Interacts with Morc2b. In terms of processing, phosphorylated by PAK1 at Ser-737 upon DNA damage. Phosphorylation is required for ATPase activity and recruitment to damaged chromatin. Expressed in the axons and Schwann cells of peripheral nerves. Expressed in testes.

The protein resides in the nucleus. It is found in the cytoplasm. The protein localises to the cytosol. Its subcellular location is the chromosome. It localises to the nucleus matrix. It carries out the reaction ATP + H2O = ADP + phosphate + H(+). ATPase activity is dependent of phosphorylation by PAK1 and presence of DNA. Its function is as follows. Essential for epigenetic silencing by the HUSH complex. Recruited by HUSH to target site in heterochromatin, the ATPase activity and homodimerization are critical for HUSH-mediated silencing. Represses germ cell-related genes and L1 retrotransposons in collaboration with SETDB1 and the HUSH complex, the silencing is dependent of repressive epigenetic modifications, such as H3K9me3 mark. Silencing events often occur within introns of transcriptionally active genes, and lead to the down-regulation of host gene expression. During DNA damage response, regulates chromatin remodeling through ATP hydrolysis. During DNA damage response, may regulate chromatin remodeling through ATP hydrolysis. In Mus musculus (Mouse), this protein is ATPase MORC2A.